A 445-amino-acid polypeptide reads, in one-letter code: Glucose-6-phosphate isomerase (445 aa).

Catalysis depends on Glu284, which acts as the Proton donor. Catalysis depends on residues His305 and Lys419.

It belongs to the GPI family.

It localises to the cytoplasm. The enzyme catalyses alpha-D-glucose 6-phosphate = beta-D-fructose 6-phosphate. The protein operates within carbohydrate biosynthesis; gluconeogenesis. Its pathway is carbohydrate degradation; glycolysis; D-glyceraldehyde 3-phosphate and glycerone phosphate from D-glucose: step 2/4. Its function is as follows. Catalyzes the reversible isomerization of glucose-6-phosphate to fructose-6-phosphate. In Leptospira interrogans serogroup Icterohaemorrhagiae serovar Lai (strain 56601), this protein is Glucose-6-phosphate isomerase.